The following is a 231-amino-acid chain: Cytochrome c oxidase subunit 2 (231 aa).

Residues 1–14 (MAHPSQLGLQDAAS) lie on the Mitochondrial intermembrane side of the membrane. The chain crosses the membrane as a helical span at residues 15 to 45 (PVMEELLHFHDHALMIVFLISTLVFYIILAM). Over 46–59 (MTTKMTDKYILDAQ) the chain is Mitochondrial matrix. The helical transmembrane segment at 60–87 (EIEIVWTLLPAIVLILVALPSLRILYLI) threads the bilayer. Residues 88–231 (DEVENPHLTI…WSSSMLEEAX (144 aa)) are Mitochondrial intermembrane-facing. Positions 161, 196, 198, 200, 204, and 207 each coordinate Cu cation. Glu198 is a Mg(2+) binding site.

This sequence belongs to the cytochrome c oxidase subunit 2 family. As to quaternary structure, component of the cytochrome c oxidase (complex IV, CIV), a multisubunit enzyme composed of 14 subunits. The complex is composed of a catalytic core of 3 subunits MT-CO1, MT-CO2 and MT-CO3, encoded in the mitochondrial DNA, and 11 supernumerary subunits COX4I, COX5A, COX5B, COX6A, COX6B, COX6C, COX7A, COX7B, COX7C, COX8 and NDUFA4, which are encoded in the nuclear genome. The complex exists as a monomer or a dimer and forms supercomplexes (SCs) in the inner mitochondrial membrane with NADH-ubiquinone oxidoreductase (complex I, CI) and ubiquinol-cytochrome c oxidoreductase (cytochrome b-c1 complex, complex III, CIII), resulting in different assemblies (supercomplex SCI(1)III(2)IV(1) and megacomplex MCI(2)III(2)IV(2)). Found in a complex with TMEM177, COA6, COX18, COX20, SCO1 and SCO2. Interacts with TMEM177 in a COX20-dependent manner. Interacts with COX20. Interacts with COX16. Cu cation serves as cofactor.

It is found in the mitochondrion inner membrane. It carries out the reaction 4 Fe(II)-[cytochrome c] + O2 + 8 H(+)(in) = 4 Fe(III)-[cytochrome c] + 2 H2O + 4 H(+)(out). In terms of biological role, component of the cytochrome c oxidase, the last enzyme in the mitochondrial electron transport chain which drives oxidative phosphorylation. The respiratory chain contains 3 multisubunit complexes succinate dehydrogenase (complex II, CII), ubiquinol-cytochrome c oxidoreductase (cytochrome b-c1 complex, complex III, CIII) and cytochrome c oxidase (complex IV, CIV), that cooperate to transfer electrons derived from NADH and succinate to molecular oxygen, creating an electrochemical gradient over the inner membrane that drives transmembrane transport and the ATP synthase. Cytochrome c oxidase is the component of the respiratory chain that catalyzes the reduction of oxygen to water. Electrons originating from reduced cytochrome c in the intermembrane space (IMS) are transferred via the dinuclear copper A center (CU(A)) of subunit 2 and heme A of subunit 1 to the active site in subunit 1, a binuclear center (BNC) formed by heme A3 and copper B (CU(B)). The BNC reduces molecular oxygen to 2 water molecules using 4 electrons from cytochrome c in the IMS and 4 protons from the mitochondrial matrix. The protein is Cytochrome c oxidase subunit 2 (MT-CO2) of Latimeria chalumnae (Coelacanth).